The following is a 277-amino-acid chain: Large ribosomal subunit protein uL2 (277 aa).

The interval T219–K277 is disordered. The span at A264–K277 shows a compositional bias: basic and acidic residues.

It belongs to the universal ribosomal protein uL2 family. As to quaternary structure, part of the 50S ribosomal subunit. Forms a bridge to the 30S subunit in the 70S ribosome.

Functionally, one of the primary rRNA binding proteins. Required for association of the 30S and 50S subunits to form the 70S ribosome, for tRNA binding and peptide bond formation. It has been suggested to have peptidyltransferase activity; this is somewhat controversial. Makes several contacts with the 16S rRNA in the 70S ribosome. The sequence is that of Large ribosomal subunit protein uL2 from Streptococcus sanguinis (strain SK36).